We begin with the raw amino-acid sequence, 245 residues long: MLRIDIVTIFPEMFKGPFDVSILKKAQDKGLVEIKVYNLRDFTEDKHRTVDDYPYGGGSGMVMKPEPIFKAVRSLKKEDSEVILLSPSGDLFNQKIAEELSKKNHLILICGRYEGVDERVKSIITREISIGDYVLTGGEIPAMVIVDAVVRLVPGVLGDPDSLREESFQWGILEYPQYTHPRDFEGMKVPDILLSGNHERIRRWRRKEALKKTFLKRPDLLEKTSLTQEDLELLEEIKKELREEV.

Residues Gly111 and 130-135 (IGDYVL) contribute to the S-adenosyl-L-methionine site.

It belongs to the RNA methyltransferase TrmD family. As to quaternary structure, homodimer.

Its subcellular location is the cytoplasm. The enzyme catalyses guanosine(37) in tRNA + S-adenosyl-L-methionine = N(1)-methylguanosine(37) in tRNA + S-adenosyl-L-homocysteine + H(+). Its function is as follows. Specifically methylates guanosine-37 in various tRNAs. This is tRNA (guanine-N(1)-)-methyltransferase from Dictyoglomus turgidum (strain DSM 6724 / Z-1310).